Reading from the N-terminus, the 346-residue chain is Histidinol-phosphate aminotransferase (346 aa).

Position 209 is an N6-(pyridoxal phosphate)lysine (Lys209).

The protein belongs to the class-II pyridoxal-phosphate-dependent aminotransferase family. Histidinol-phosphate aminotransferase subfamily. Homodimer. The cofactor is pyridoxal 5'-phosphate.

It carries out the reaction L-histidinol phosphate + 2-oxoglutarate = 3-(imidazol-4-yl)-2-oxopropyl phosphate + L-glutamate. It participates in amino-acid biosynthesis; L-histidine biosynthesis; L-histidine from 5-phospho-alpha-D-ribose 1-diphosphate: step 7/9. In Vibrio vulnificus (strain YJ016), this protein is Histidinol-phosphate aminotransferase.